The following is a 156-amino-acid chain: Small ribosomal subunit protein uS7 (156 aa).

The protein belongs to the universal ribosomal protein uS7 family. As to quaternary structure, part of the 30S ribosomal subunit. Contacts proteins S9 and S11.

Functionally, one of the primary rRNA binding proteins, it binds directly to 16S rRNA where it nucleates assembly of the head domain of the 30S subunit. Is located at the subunit interface close to the decoding center, probably blocks exit of the E-site tRNA. This Wigglesworthia glossinidia brevipalpis protein is Small ribosomal subunit protein uS7.